The chain runs to 310 residues: MENGVVMEDRLIAEEIKKLKEERNAIILAHFYTRGEVREFADFVGDSLSLCREAVNSKADVIVFAGVHFMAESASILSPEKSVLLPVPEAGCPMADMVTVETLRKEKEKHPDAAVVCYVNSSAAVKAESDICCTSSNAVNVVNSVENREIIFVPDKNLGAFVSLHTDKKIHLRPGFCHVHENIGKEDIEELKNLHPEAEFLAHPECRPEVMSFADHILSTSGIVKEAGRSESTEFIIGTEKEIVQSLKRKYPDRKFYPVSKKAVCYNMKKVTLESILNSLQNMEYEVQVPEHVRAKAKKALDRMLSVSGT.

Iminosuccinate contacts are provided by His-30 and Ser-47. Cys-92 contributes to the [4Fe-4S] cluster binding site. Residues 118–120 (YVN) and Ser-135 contribute to the iminosuccinate site. A [4Fe-4S] cluster-binding site is contributed by Cys-177. Iminosuccinate is bound by residues 203–205 (HPE) and Thr-220. Position 265 (Cys-265) interacts with [4Fe-4S] cluster.

It belongs to the quinolinate synthase family. Type 2 subfamily. It depends on [4Fe-4S] cluster as a cofactor.

It localises to the cytoplasm. It carries out the reaction iminosuccinate + dihydroxyacetone phosphate = quinolinate + phosphate + 2 H2O + H(+). Its pathway is cofactor biosynthesis; NAD(+) biosynthesis; quinolinate from iminoaspartate: step 1/1. Catalyzes the condensation of iminoaspartate with dihydroxyacetone phosphate to form quinolinate. In Methanosarcina acetivorans (strain ATCC 35395 / DSM 2834 / JCM 12185 / C2A), this protein is Quinolinate synthase 2.